An 88-amino-acid chain; its full sequence is Small ribosomal subunit protein uS15 (88 aa).

The protein belongs to the universal ribosomal protein uS15 family. As to quaternary structure, part of the 30S ribosomal subunit. Forms a bridge to the 50S subunit in the 70S ribosome, contacting the 23S rRNA.

In terms of biological role, one of the primary rRNA binding proteins, it binds directly to 16S rRNA where it helps nucleate assembly of the platform of the 30S subunit by binding and bridging several RNA helices of the 16S rRNA. Its function is as follows. Forms an intersubunit bridge (bridge B4) with the 23S rRNA of the 50S subunit in the ribosome. This Variovorax paradoxus (strain S110) protein is Small ribosomal subunit protein uS15.